The chain runs to 466 residues: 3-isopropylmalate dehydratase large subunit (466 aa).

Cysteine 347, cysteine 407, and cysteine 410 together coordinate [4Fe-4S] cluster.

It belongs to the aconitase/IPM isomerase family. LeuC type 1 subfamily. In terms of assembly, heterodimer of LeuC and LeuD. It depends on [4Fe-4S] cluster as a cofactor.

It carries out the reaction (2R,3S)-3-isopropylmalate = (2S)-2-isopropylmalate. The protein operates within amino-acid biosynthesis; L-leucine biosynthesis; L-leucine from 3-methyl-2-oxobutanoate: step 2/4. Its function is as follows. Catalyzes the isomerization between 2-isopropylmalate and 3-isopropylmalate, via the formation of 2-isopropylmaleate. This chain is 3-isopropylmalate dehydratase large subunit, found in Vibrio vulnificus (strain YJ016).